The primary structure comprises 318 residues: N-acetyl-gamma-glutamyl-phosphate reductase (318 aa).

The active site involves Cys132.

Belongs to the NAGSA dehydrogenase family. Type 1 subfamily.

Its subcellular location is the cytoplasm. It catalyses the reaction N-acetyl-L-glutamate 5-semialdehyde + phosphate + NADP(+) = N-acetyl-L-glutamyl 5-phosphate + NADPH + H(+). Its pathway is amino-acid biosynthesis; L-arginine biosynthesis; N(2)-acetyl-L-ornithine from L-glutamate: step 3/4. Catalyzes the NADPH-dependent reduction of N-acetyl-5-glutamyl phosphate to yield N-acetyl-L-glutamate 5-semialdehyde. This Azobacteroides pseudotrichonymphae genomovar. CFP2 protein is N-acetyl-gamma-glutamyl-phosphate reductase.